The following is a 951-amino-acid chain: Zinc fingers and homeoboxes protein 3 (951 aa).

Positions 1–66 are disordered; the sequence is MASKRKSTTP…SSTDGSALAN (66 aa). The interval 1 to 107 is required for nuclear localization; sequence MASKRKSTTP…SEHTDFNKDP (107 aa). The segment covering 42 to 58 has biased composition (low complexity); sequence PSEAPDASSEAAPNPSS. 2 C2H2-type zinc fingers span residues 77–100 and 109–132; these read YCCK…NSEH and FVCT…AKCH. A disordered region spans residues 227–252; it reads TFINGAAPGSQASAKSTKPPPAANGP. The tract at residues 238-483 is required for homodimerization and interaction with NFYA; the sequence is ASAKSTKPPP…LLTACPSITS (246 aa). The required for repressor activity stretch occupies residues 299-497; that stretch reads LSSIPTYNAA…DANIYKNKKS (199 aa). 2 consecutive DNA-binding regions (homeobox) follow at residues 300–359 and 489–548; these read SSIP…GISW and ANIY…RNLK. Residues 492 to 550 form a required for nuclear localization region; it reads YKNKKSHEQLSALKGSFCRNQFPGQSEVEHLTKVTGLSTREVRKWFSDRRYHCRNLKGS. A Phosphoserine modification is found at serine 599. Residues 607 to 666 constitute a DNA-binding region (homeobox 3); the sequence is TPTKYKERAPEQLRVLENSFAQNPLPPEEELDRLRSETKMTRREIDGWFSERRKKVNTEE. The segment covering 662–676 has biased composition (basic and acidic residues); it reads VNTEETKKADGHMPK. The segment at 662–690 is disordered; the sequence is VNTEETKKADGHMPKEEEEGAEQEGRDEE. The segment covering 677-690 has biased composition (acidic residues); that stretch reads EEEEGAEQEGRDEE. Serine 703 and serine 718 each carry phosphoserine. 2 consecutive DNA-binding regions (homeobox) follow at residues 759 to 818 and 830 to 889; these read PSKV…KNGQ and FPPG…TRAV. Residues 916 to 951 are disordered; sequence SELSENSESWEPSAPEASSEPFDTSSPQSGRQLEAD. The segment covering 919–936 has biased composition (low complexity); sequence SENSESWEPSAPEASSEP. 2 positions are modified to phosphoserine: serine 922 and serine 941. The span at 937-951 shows a compositional bias: polar residues; the sequence is FDTSSPQSGRQLEAD.

It belongs to the ZHX family. Homodimer (via homeobox domain 1). Heterodimer with ZHX1 (via homeobox domain 1). Heterodimer with ZHX2 (via homeobox domain 1). Heterodimerization with ZHX1 is a prerequisite for repressor activity. Interacts with NFYA. Ubiquitously expressed.

Its subcellular location is the nucleus. In terms of biological role, acts as a transcriptional repressor. Involved in the early stages of mesenchymal stem cell (MSC) osteogenic differentiation. Is a regulator of podocyte gene expression during primary glomerula disease. Binds to promoter DNA. The polypeptide is Zinc fingers and homeoboxes protein 3 (Zhx3) (Mus musculus (Mouse)).